Here is a 329-residue protein sequence, read N- to C-terminus: Lipoyl synthase (329 aa).

A disordered region spans residues 1–23 (MTDLTATPAPAEPAASAYDPTAK). Residues C76, C81, C87, C102, C106, C109, and S316 each contribute to the [4Fe-4S] cluster site. One can recognise a Radical SAM core domain in the interval 87-305 (CFGKGTATFM…EEEAYKMGFT (219 aa)).

It belongs to the radical SAM superfamily. Lipoyl synthase family. The cofactor is [4Fe-4S] cluster.

The protein localises to the cytoplasm. The enzyme catalyses [[Fe-S] cluster scaffold protein carrying a second [4Fe-4S](2+) cluster] + N(6)-octanoyl-L-lysyl-[protein] + 2 oxidized [2Fe-2S]-[ferredoxin] + 2 S-adenosyl-L-methionine + 4 H(+) = [[Fe-S] cluster scaffold protein] + N(6)-[(R)-dihydrolipoyl]-L-lysyl-[protein] + 4 Fe(3+) + 2 hydrogen sulfide + 2 5'-deoxyadenosine + 2 L-methionine + 2 reduced [2Fe-2S]-[ferredoxin]. It functions in the pathway protein modification; protein lipoylation via endogenous pathway; protein N(6)-(lipoyl)lysine from octanoyl-[acyl-carrier-protein]: step 2/2. In terms of biological role, catalyzes the radical-mediated insertion of two sulfur atoms into the C-6 and C-8 positions of the octanoyl moiety bound to the lipoyl domains of lipoate-dependent enzymes, thereby converting the octanoylated domains into lipoylated derivatives. This chain is Lipoyl synthase, found in Burkholderia pseudomallei (strain 1106a).